We begin with the raw amino-acid sequence, 62 residues long: Photosystem II reaction center protein Z (62 aa).

An N-formylmethionine modification is found at Met1. Residues 1–4 (MTIL) are Lumenal-facing. The chain crosses the membrane as a helical span at residues 5–25 (FQLALAALVILSFVMVIGVPV). Over 26–36 (AYASPQDWDRS) the chain is Cytoplasmic. The chain crosses the membrane as a helical span at residues 37-58 (KQLIFLGSGLWIALVLVVGVLN). Over 59–62 (FFVV) the chain is Lumenal.

This sequence belongs to the PsbZ family. PSII is composed of 1 copy each of membrane proteins PsbA, PsbB, PsbC, PsbD, PsbE, PsbF, PsbH, PsbI, PsbJ, PsbK, PsbL, PsbM, PsbT, PsbX, PsbY, PsbZ, Psb30/Ycf12, peripheral proteins PsbO, CyanoQ (PsbQ), PsbU, PsbV and a large number of cofactors. It forms dimeric complexes. Part of a photosystem II (PSII) assembly intermediate complex PSII-I; crystallized from a strain deleted of psbJ, it forms monomeric PSII before addition of the oxygen evolving complex. PSII-I includes 3 assembly factors not found in mature PSII (Psb27, Psb28 and Psb34). The cofactor is PSII binds multiple chlorophylls, carotenoids and specific lipids..

Its subcellular location is the cellular thylakoid membrane. Functionally, may control the interaction of photosystem II (PSII) cores with the light-harvesting antenna, regulates electron flow through the 2 photosystem reaction centers. PSII is a light-driven water plastoquinone oxidoreductase, using light energy to abstract electrons from H(2)O, generating a proton gradient subsequently used for ATP formation. May also aid in binding of PsbK, Psb30/Ycf12 and the oxygen-evolving complex to PSII, at least in vitro. The polypeptide is Photosystem II reaction center protein Z (Thermosynechococcus vestitus (strain NIES-2133 / IAM M-273 / BP-1)).